Here is a 506-residue protein sequence, read N- to C-terminus: ATP synthase subunit alpha, chloroplastic (506 aa).

170 to 177 (GDRQTGKT) contributes to the ATP binding site.

It belongs to the ATPase alpha/beta chains family. As to quaternary structure, F-type ATPases have 2 components, CF(1) - the catalytic core - and CF(0) - the membrane proton channel. CF(1) has five subunits: alpha(3), beta(3), gamma(1), delta(1), epsilon(1). CF(0) has four main subunits: a, b, b' and c.

It is found in the plastid. The protein localises to the chloroplast thylakoid membrane. The enzyme catalyses ATP + H2O + 4 H(+)(in) = ADP + phosphate + 5 H(+)(out). Functionally, produces ATP from ADP in the presence of a proton gradient across the membrane. The alpha chain is a regulatory subunit. The chain is ATP synthase subunit alpha, chloroplastic from Chlorella vulgaris (Green alga).